We begin with the raw amino-acid sequence, 362 residues long: 3-dehydroquinate synthase (362 aa).

Residues aspartate 71 to lysine 76, glycine 105 to aspartate 109, threonine 129 to threonine 130, lysine 142, lysine 151, and cysteine 169 to threonine 172 contribute to the NAD(+) site. Glutamate 184, histidine 247, and histidine 264 together coordinate Zn(2+).

It belongs to the sugar phosphate cyclases superfamily. Dehydroquinate synthase family. It depends on Co(2+) as a cofactor. Requires Zn(2+) as cofactor. NAD(+) serves as cofactor.

Its subcellular location is the cytoplasm. It catalyses the reaction 7-phospho-2-dehydro-3-deoxy-D-arabino-heptonate = 3-dehydroquinate + phosphate. Its pathway is metabolic intermediate biosynthesis; chorismate biosynthesis; chorismate from D-erythrose 4-phosphate and phosphoenolpyruvate: step 2/7. Catalyzes the conversion of 3-deoxy-D-arabino-heptulosonate 7-phosphate (DAHP) to dehydroquinate (DHQ). This is 3-dehydroquinate synthase from Salmonella enteritidis PT4 (strain P125109).